The following is a 233-amino-acid chain: MTTYSTDSQGKFIPATQRPDGTWRKPRRVRDGYVPQEEVPLYESKGKQFAQKPALPPGLSPEVVQKAKEKRERERLRQAREEQQRKEQQNKKQQAGALPPGVLAVDGGAVGGNNDKQKPGAKQPQQHTKSSQQKSTTAAAAAVSNNSDSTVDELASALASGAQLAGADAQQLEVAKKLRKLRKKIREIEAIETKLRSTDGPKLDKDQLEKVKRKPDILQEIEELEVQYSAGAM.

A disordered region spans residues 1–153; that stretch reads MTTYSTDSQG…SNNSDSTVDE (153 aa). Residues 62 to 97 adopt a coiled-coil conformation; the sequence is EVVQKAKEKRERERLRQAREEQQRKEQQNKKQQAGA. The span at 65–90 shows a compositional bias: basic and acidic residues; the sequence is QKAKEKRERERLRQAREEQQRKEQQN. Residues 122 to 142 show a composition bias toward low complexity; sequence KQPQQHTKSSQQKSTTAAAAA. Positions 167 to 199 form a coiled coil; sequence ADAQQLEVAKKLRKLRKKIREIEAIETKLRSTD.

Belongs to the pym family. Interacts (via N-terminus) with mago and tsu/Y14; the interaction is direct.

The protein resides in the cytoplasm. It is found in the nucleus. Its function is as follows. Regulator of the exon junction complex (EJC), a multiprotein complex that associates immediately upstream of the exon-exon junction on mRNAs and serves as a positional landmarks for the intron exon structure of genes and directs post-transcriptional processes in the cytoplasm such as mRNA export, nonsense-mediated mRNA decay (NMD) or translation. The chain is Partner of Y14 and mago from Anopheles gambiae (African malaria mosquito).